The chain runs to 464 residues: MSKKTGTKTSKSGSKKSNKDVEKLVDDEDIQDLSDKKNKISQSKNLVKNNKSSKNSKSSKSVKSTKTSTKTSLKKQVKTPPKKQTKTSSKKNKKDESDDDVTDNSDISDDDNTGNSDISDDENDQEEDNDISSDEEETETRQKSSGKKGNVNKDVGSSRKLKTDKNARNDNKVLEIRTTQTGALKQVFERVSGVISDCCLTFMPADKDINNAGDDNEYYEDESTKSSHKQSKTTDRPKNTGGIRIIRLTEDNNTLVKVVLEAANFEYFRCDEPKITVGVDMHTLHSHLKMINDDDPIVIYMKKDIQGSLYIRSLSENNDNSEEREIELFLMDIINPEIPVPKTEFQNRITMKSDKFHLICKHLSQNSTFVEITSINNEILFKGQSEGGKVTMTYKDTGYKKKEKPDQVIQGVYELRNLLGFSKCNKLCNTIEIYLKNDFPLVLVISVATLGKMYVFLSPIDNGN.

2 disordered regions span residues 1–168 (MSKK…KNAR) and 210–239 (NNAGDDNEYYEDESTKSSHKQSKTTDRPKN). Low complexity predominate over residues 41-71 (SQSKNLVKNNKSSKNSKSSKSVKSTKTSTKT). The segment covering 72–92 (SLKKQVKTPPKKQTKTSSKKN) has biased composition (basic residues). Residues 97–138 (SDDDVTDNSDISDDDNTGNSDISDDENDQEEDNDISSDEEET) are compositionally biased toward acidic residues.

It belongs to the PCNA family.

In terms of biological role, sliding clamp subunit. Responsible for tethering the catalytic subunit of DNA polymerase to DNA during high-speed replication. The protein is Probable DNA polymerase sliding clamp (PCNA) of Acanthamoeba polyphaga (Amoeba).